Consider the following 1483-residue polypeptide: Chromosome partition protein MukB (1483 aa).

34 to 41 (GGNGAGKS) contacts ATP. Coiled coils occupy residues 311 to 426 (EMAR…LQRA) and 547 to 607 (GQQV…WLAA). The interval 666-783 (PGGSEDARLN…KVPLFGRAAR (118 aa)) is flexible hinge. Coiled-coil stretches lie at residues 835 to 1115 (EAAL…SAKA) and 1206 to 1266 (DDPV…QAVS). The disordered stretch occupies residues 850 to 870 (RELNNHESENQQQRQQYEQAK).

This sequence belongs to the SMC family. MukB subfamily. Homodimerization via its hinge domain. Binds to DNA via its C-terminal region. Interacts, and probably forms a ternary complex, with MukE and MukF via its C-terminal region. The complex formation is stimulated by calcium or magnesium. Interacts with tubulin-related protein FtsZ.

It localises to the cytoplasm. Its subcellular location is the nucleoid. In terms of biological role, plays a central role in chromosome condensation, segregation and cell cycle progression. Functions as a homodimer, which is essential for chromosome partition. Involved in negative DNA supercoiling in vivo, and by this means organize and compact chromosomes. May achieve or facilitate chromosome segregation by condensation DNA from both sides of a centrally located replisome during cell division. The sequence is that of Chromosome partition protein MukB from Erwinia tasmaniensis (strain DSM 17950 / CFBP 7177 / CIP 109463 / NCPPB 4357 / Et1/99).